The chain runs to 562 residues: Protein wntless (562 aa).

The Cytoplasmic segment spans residues 1-13; that stretch reads MSGTILENLSGRK. The helical transmembrane segment at 14–34 threads the bilayer; it reads LSILVASLLLCQVFCFLLGGL. The Lumenal portion of the chain corresponds to 35–239; the sequence is YAPLPAGHVT…AIHQNGGFTQ (205 aa). N58 carries an N-linked (GlcNAc...) asparagine glycan. Residues 240–260 traverse the membrane as a helical segment; the sequence is IWLMLKTVLFPFVVGIMIWFW. The Cytoplasmic segment spans residues 261-270; that stretch reads RRVHLLQRSP. A helical membrane pass occupies residues 271–291; it reads ALLEYMLIYLGGALTFLNLPL. Residues 292–311 lie on the Lumenal side of the membrane; sequence EYLSLVVEMPYMLLLSDIRQ. Residues 312–332 traverse the membrane as a helical segment; the sequence is GIFYAMLLSFWLVFAGEHMLI. Topologically, residues 333–344 are cytoplasmic; sequence QDAPNKSTIRSR. The chain crosses the membrane as a helical span at residues 345–365; sequence YWKHLSAVVVGCISLFVFDIC. The Lumenal segment spans residues 366–390; that stretch reads ERGVQLRNPFYSIWTTPLGAKVAMT. A helical membrane pass occupies residues 391–411; the sequence is FIILAGVSAAIYFLFLCYMIW. Residues 412–441 are Cytoplasmic-facing; that stretch reads KVFRNIGDKRTSLPSMSQARRLHYEGLIYR. The chain crosses the membrane as a helical span at residues 442–462; it reads FKFLMLATLLCAALTVAGFIM. Residues 463–482 lie on the Lumenal side of the membrane; that stretch reads GQMAEGQWQWNDNVEIQLTS. The chain crosses the membrane as a helical span at residues 483–503; it reads AFLTGVYGMWNIYIFALLILY. The Cytoplasmic segment spans residues 504-562; the sequence is APSHKQWPTMHHSDETTQSNENIVASAASEEIEFSHLPSDSNPSEISSLTSFTRKVAFD. Positions 539 to 562 are disordered; that stretch reads HLPSDSNPSEISSLTSFTRKVAFD. A compositionally biased stretch (polar residues) spans 541 to 556; it reads PSDSNPSEISSLTSFT.

This sequence belongs to the wntless family. Interacts with wg; in the Golgi. Interacts with Vps35, a component of the retromer complex; wls stability is regulated by Vps35.

It localises to the presynaptic cell membrane. The protein localises to the postsynaptic cell membrane. It is found in the cell membrane. Its subcellular location is the endoplasmic reticulum membrane. The protein resides in the endosome membrane. It localises to the golgi apparatus membrane. A segment polarity gene required for wingless (wg)-dependent patterning processes, acting in both wg-sending cells and wg-target cells. In non-neuronal cells wls directs wg secretion. The wls traffic loop encompasses the Golgi, the cell surface, an endocytic compartment and a retrograde route leading back to the Golgi, and involves clathrin-mediated endocytosis and the retromer complex (a conserved protein complex consisting of Vps35 and Vps26). In neuronal cells (the larval motorneuron NMJ), the wg signal moves across the synapse via the release of wls-containing exosome-like vesicles. Postsynaptic wls is required for the trafficking of fz2 through the fz2-interacting protein Grip. This Drosophila ananassae (Fruit fly) protein is Protein wntless.